A 94-amino-acid polypeptide reads, in one-letter code: Large ribosomal subunit protein uL23 (94 aa).

It belongs to the universal ribosomal protein uL23 family. As to quaternary structure, part of the 50S ribosomal subunit. Contacts protein L29, and trigger factor when it is bound to the ribosome.

Functionally, one of the early assembly proteins it binds 23S rRNA. One of the proteins that surrounds the polypeptide exit tunnel on the outside of the ribosome. Forms the main docking site for trigger factor binding to the ribosome. The sequence is that of Large ribosomal subunit protein uL23 from Treponema denticola (strain ATCC 35405 / DSM 14222 / CIP 103919 / JCM 8153 / KCTC 15104).